Consider the following 393-residue polypeptide: G protein-activated inward rectifier potassium channel 3 (393 aa).

Positions 1-23 (MAQENAAFSPGQEEPPRRRGRQR) are disordered. Over 1 to 57 (MAQENAAFSPGQEEPPRRRGRQRYVEKDGRCNVQQGNVRETYRYLTDLFTTLVDLQW) the chain is Cytoplasmic. A helical membrane pass occupies residues 58 to 82 (RLSLLFFVLAYALTWLFFGAIWWLI). Over 83–106 (AYGRGDLEHLEDTAWTPCVNNLNG) the chain is Extracellular. The segment at residues 107-118 (FVAAFLFSIETE) is an intramembrane region (helical; Pore-forming). The segment at residues 119-125 (TTIGYGH) is an intramembrane region (pore-forming). Positions 120 to 125 (TIGYGH) match the Selectivity filter motif. Residues 126-134 (RVITDQCPE) are Extracellular-facing. Residues 135 to 156 (GIVLLLLQAILGSMVNAFMVGC) form a helical membrane-spanning segment. Residues 157–393 (MFVKISQPNK…LPPPESESKV (237 aa)) lie on the Cytoplasmic side of the membrane. The segment at 360 to 393 (KVEEEGAGEGAGGEAGADKEQNGCLPPPESESKV) is disordered. A compositionally biased stretch (pro residues) spans 384-393 (LPPPESESKV). Residues 390–393 (ESKV) carry the PDZ-binding motif.

The protein belongs to the inward rectifier-type potassium channel (TC 1.A.2.1) family. KCNJ9 subfamily. In terms of assembly, associates with KCNJ3/GIRK1 to form a G-protein-activated heteromultimer pore-forming unit. Interacts (via PDZ-binding motif) with SNX27 (via PDZ domain); the interaction is required when endocytosed to prevent degradation in lysosomes and promote recycling to the plasma membrane.

It is found in the membrane. It catalyses the reaction K(+)(in) = K(+)(out). Its function is as follows. Inward rectifier potassium channels are characterized by a greater tendency to allow potassium to flow into the cell rather than out of it. Their voltage dependence is regulated by the concentration of extracellular potassium; as external potassium is raised, the voltage range of the channel opening shifts to more positive voltages. The inward rectification is mainly due to the blockage of outward current by internal magnesium, This receptor is controlled by G proteins. Unable to produce channel activity when expressed alone. Forms a functional channel in association with KCNJ3/GIRK1. The sequence is that of G protein-activated inward rectifier potassium channel 3 (KCNJ9) from Homo sapiens (Human).